Consider the following 283-residue polypeptide: uncharacterized protein (283 aa).

The protein belongs to the glycosyltransferase 2 family. WaaE/KdtX subfamily.

This is an uncharacterized protein from Rickettsia felis (strain ATCC VR-1525 / URRWXCal2) (Rickettsia azadi).